The following is a 99-amino-acid chain: Ubiquitin-related modifier 1 homolog 2 (99 aa).

Gly99 carries the post-translational modification 1-thioglycine. Residue Gly99 forms a Glycyl lysine isopeptide (Gly-Lys) (interchain with K-? in acceptor proteins) linkage.

The protein belongs to the URM1 family. C-terminal thiocarboxylation occurs in 2 steps, it is first acyl-adenylated (-COAMP) via the hesA/moeB/thiF part of the MOCS3 homolog, then thiocarboxylated (-COSH) via the rhodanese domain of the MOCS3 homolog.

The protein resides in the cytoplasm. Its pathway is tRNA modification; 5-methoxycarbonylmethyl-2-thiouridine-tRNA biosynthesis. Functionally, acts as a sulfur carrier required for 2-thiolation of mcm(5)S(2)U at tRNA wobble positions of cytosolic tRNA(Lys), tRNA(Glu) and tRNA(Gln). Serves as sulfur donor in tRNA 2-thiolation reaction by being thiocarboxylated (-COSH) at its C-terminus by MOCS3. The sulfur is then transferred to tRNA to form 2-thiolation of mcm(5)S(2)U. Also acts as a ubiquitin-like protein (UBL) that is covalently conjugated via an isopeptide bond to lysine residues of target proteins. The thiocarboxylated form serves as substrate for conjugation and oxidative stress specifically induces the formation of UBL-protein conjugates. This is Ubiquitin-related modifier 1 homolog 2 from Arabidopsis thaliana (Mouse-ear cress).